Here is a 208-residue protein sequence, read N- to C-terminus: MSPTKDSHPSPHFPRDSGIHAPTPPDSGALTLSPPVSQGPGVGPRTGRGNRLCRPPGRSAARSFCLLPGPPLGTGALGSPRAAQGLGFRGSGQRARHNSFTSPSPPGAHHPLGTHTRALPPPLARCPCAALLAGRECHGGPSPAAPRPLPGTSLTWPSRAPLPRPPPRERQGPGDRSPSPSAPSCPGVGASSPRRRKPREAAGLTPDG.

Over residues 1-18 (MSPTKDSHPSPHFPRDSG) the composition is skewed to basic and acidic residues. Disordered stretches follow at residues 1–122 (MSPT…LPPP) and 135–208 (RECH…TPDG).

This is an uncharacterized protein from Homo sapiens (Human).